The sequence spans 212 residues: Translation initiation factor IF-3 (212 aa).

The tract at residues 168-212 (MAPKAPASPKKDKADRPEGDAGDTDMAAPAPAPAAAPETESAPSA) is disordered. Positions 176-186 (PKKDKADRPEG) are enriched in basic and acidic residues. Positions 194–212 (AAPAPAPAAAPETESAPSA) are enriched in low complexity.

This sequence belongs to the IF-3 family. As to quaternary structure, monomer.

It localises to the cytoplasm. In terms of biological role, IF-3 binds to the 30S ribosomal subunit and shifts the equilibrium between 70S ribosomes and their 50S and 30S subunits in favor of the free subunits, thus enhancing the availability of 30S subunits on which protein synthesis initiation begins. The protein is Translation initiation factor IF-3 of Deinococcus radiodurans (strain ATCC 13939 / DSM 20539 / JCM 16871 / CCUG 27074 / LMG 4051 / NBRC 15346 / NCIMB 9279 / VKM B-1422 / R1).